Consider the following 419-residue polypeptide: Pygopus homolog 1 (419 aa).

Disordered stretches follow at residues 1-64 (MPAE…PNSD) and 175-338 (HFRQ…SSSD). The segment covering 18 to 30 (GDSGLDGLGGPGV) has biased composition (gly residues). The short motif at 35 to 41 (PDKKKRK) is the Nuclear localization signal element. Composition is skewed to polar residues over residues 175–221 (HFRQ…SNHS) and 240–255 (DFTQ…NSSA). The segment covering 276-286 (VNRNNAVNQEN) has biased composition (low complexity). Residues 287 to 307 (SRSSSTEATNNNPANGTQNKP) show a composition bias toward polar residues. A PHD-type zinc finger spans residues 340 to 398 (VYPCGICTNEVNDDQDAILCEASCQKWFHRICTGMTETAYGLLTAEASAVWGCDTCMAD). The interval 341 to 388 (YPCGICTNEVNDDQDAILCEASCQKWFHRICTGMTETAYGLLTAEASA) is interaction with H3K4me2. The tract at residues 373-391 (GMTETAYGLLTAEASAVWG) is interaction with BCL9.

Interacts with BCL9 via The PHD-type zinc finger motiv, and thereby becomes part of the nuclear beta-catenin/TCF complex. Identified in a complex with BCL9L, CDC73, CTNNB1 and PYGO1. Interacts with histone H3 mono-, di- or tri-methylated at 'Lys4' (H3K4me1, H3K4me2, H3K4me3); the interaction is enhanced by the interaction with BCL9.

Its subcellular location is the nucleus. Involved in signal transduction through the Wnt pathway. The protein is Pygopus homolog 1 (PYGO1) of Homo sapiens (Human).